A 513-amino-acid chain; its full sequence is Aromatic amino acid aminotransferase 2 (513 aa).

A phosphoserine mark is found at Ser90 and Ser92. Residues Tyr102, Ser143–Asn144, Asn232, Tyr263, and Thr314–Ser316 each bind pyridoxal 5'-phosphate. Residue Asn232 coordinates substrate. Residue Lys317 is modified to N6-(pyridoxal phosphate)lysine. Arg324 contacts pyridoxal 5'-phosphate. Arg481 serves as a coordination point for substrate.

This sequence belongs to the class-I pyridoxal-phosphate-dependent aminotransferase family. The cofactor is pyridoxal 5'-phosphate.

It is found in the cytoplasm. The enzyme catalyses an aromatic L-alpha-amino acid + 2-oxoglutarate = an aromatic oxo-acid + L-glutamate. The catalysed reaction is an aromatic L-alpha-amino acid + 4-methylsulfanyl-2-oxobutanoate = an aromatic oxo-acid + L-methionine. It catalyses the reaction L-kynurenine + 2-oxoglutarate = kynurenate + L-glutamate + H2O. The protein operates within amino-acid biosynthesis; L-methionine biosynthesis via salvage pathway; L-methionine from S-methyl-5-thio-alpha-D-ribose 1-phosphate: step 6/6. It functions in the pathway amino-acid degradation; L-kynurenine degradation; kynurenate from L-kynurenine: step 1/2. In terms of biological role, general aromatic amino acid transaminase involved in several otherwise unrelated metabolic pathways. Mainly involved in tryptophan degradation. Active with phenylalanine, tyrosine and tryptophan as amino donors and with phenylpyruvate, hydroxyphenylpyruvate and pyruvate as amino acceptors. Does not accept glutamate or 2-oxoglutarate as substrates. Also active with methionine, leucine, glutamine and kynurenine. Catalyzes the formation of methionine from 2-keto-4-methylthiobutyrate (KMTB) in the methionine salvage pathway primarily using aromatic amino acids (tyrosine, phenylalanine and tryptophan) as the amino donors. Catalyzes the irreversible transamination of the L-tryptophan metabolite L-kynurenine to form kynurenic acid (KA) with pyruvate as amino acceptor. The chain is Aromatic amino acid aminotransferase 2 from Saccharomyces cerevisiae (strain ATCC 204508 / S288c) (Baker's yeast).